A 360-amino-acid chain; its full sequence is DNA replication and repair protein RecF (360 aa).

30–37 lines the ATP pocket; sequence GHNGSGKT.

This sequence belongs to the RecF family.

It localises to the cytoplasm. Functionally, the RecF protein is involved in DNA metabolism; it is required for DNA replication and normal SOS inducibility. RecF binds preferentially to single-stranded, linear DNA. It also seems to bind ATP. The polypeptide is DNA replication and repair protein RecF (Actinobacillus pleuropneumoniae serotype 3 (strain JL03)).